Reading from the N-terminus, the 211-residue chain is Probable endopeptidase cgR_2070 (211 aa).

The signal sequence occupies residues 1–35 (MGKHRRNNSNATRKAVAASAVALGATAAIASPAQA). Positions 97–211 (ASTGQAIVDA…YMPFHSAVRF (115 aa)) constitute a NlpC/P60 domain. Cys127 acts as the Nucleophile in catalysis. The active-site Proton acceptor is the His175. His187 is an active-site residue.

This sequence belongs to the peptidase C40 family.

The protein resides in the secreted. The chain is Probable endopeptidase cgR_2070 from Corynebacterium glutamicum (strain R).